The sequence spans 209 residues: Probable phosphatidylglycerophosphate synthase (209 aa).

4 consecutive transmembrane segments (helical) span residues 32–52 (ILTLLRLVMVPVFLLALFYGG), 105–125 (ALIGLSMLGDLPWWVTVLILT), 147–167 (WGGKLKTFVQAVAIGLFVLPL), and 171–191 (LHVAAVVVMAAAILLTVITGV).

This sequence belongs to the CDP-alcohol phosphatidyltransferase class-I family.

It is found in the cell membrane. The enzyme catalyses a CDP-1,2-diacyl-sn-glycerol + sn-glycerol 3-phosphate = a 1,2-diacyl-sn-glycero-3-phospho-(1'-sn-glycero-3'-phosphate) + CMP + H(+). The protein operates within lipid metabolism; phospholipid metabolism. In terms of biological role, probably catalyzes the synthesis of phosphatidylglycerophosphate by transferring a phosphatidyl group from CDP-diacylglycerol to glycerol 3-phosphate. In Mycobacterium tuberculosis (strain CDC 1551 / Oshkosh), this protein is Probable phosphatidylglycerophosphate synthase.